A 424-amino-acid chain; its full sequence is Proline--tRNA ligase (424 aa).

This sequence belongs to the class-II aminoacyl-tRNA synthetase family. ProS type 2 subfamily. In terms of assembly, homodimer.

It is found in the cytoplasm. The enzyme catalyses tRNA(Pro) + L-proline + ATP = L-prolyl-tRNA(Pro) + AMP + diphosphate. In terms of biological role, catalyzes the attachment of proline to tRNA(Pro) in a two-step reaction: proline is first activated by ATP to form Pro-AMP and then transferred to the acceptor end of tRNA(Pro). The polypeptide is Proline--tRNA ligase (Ehrlichia canis (strain Jake)).